A 559-amino-acid polypeptide reads, in one-letter code: Thermosome subunit alpha (559 aa).

Basic and acidic residues predominate over residues 536 to 552; it reads SGEKKGEKKEGGEEEKS. Residues 536–559 form a disordered region; the sequence is SGEKKGEKKEGGEEEKSSTPSSLE.

The protein belongs to the TCP-1 chaperonin family. In terms of assembly, forms a Heterooligomeric complex of two stacked nine-membered rings; one of alpha and the other of beta subunits.

Functionally, molecular chaperone; binds unfolded polypeptides in vitro, and has a weak ATPase activity. The protein is Thermosome subunit alpha (thsA) of Sulfurisphaera tokodaii (strain DSM 16993 / JCM 10545 / NBRC 100140 / 7) (Sulfolobus tokodaii).